Consider the following 304-residue polypeptide: Small ribosomal subunit protein uS3 (304 aa).

One can recognise a KH type-2 domain in the interval 17–86 (MDEYFAKQLS…NPQIDAQEVK (70 aa)).

This sequence belongs to the universal ribosomal protein uS3 family. In terms of assembly, part of the 30S ribosomal subunit.

Binds the lower part of the 30S subunit head. This Methanococcoides burtonii (strain DSM 6242 / NBRC 107633 / OCM 468 / ACE-M) protein is Small ribosomal subunit protein uS3.